Consider the following 241-residue polypeptide: MTFTLYPAIDLKDGACVRLLRGEMDAATVFNTDPADQARAFHAMGFTHLHVVDLNGAFAGAPVNRAAVEGILKATPAPVQLGGGIRTRAQIDAWLEAGISRVILGTIALRDPELVKTAARALPGRIVVGIDAKDGMVAVEGWAETSDMKATELAKAFEGCGVAAIVATDIGRDGLKTGVNVPFTAELAHAVSIPVIASGGVRDVNDIRALKASGAPIAGSILGRALYDGDIVASEAIEAAG.

Residue D10 is the Proton acceptor of the active site. D131 (proton donor) is an active-site residue.

This sequence belongs to the HisA/HisF family.

The protein resides in the cytoplasm. The enzyme catalyses 1-(5-phospho-beta-D-ribosyl)-5-[(5-phospho-beta-D-ribosylamino)methylideneamino]imidazole-4-carboxamide = 5-[(5-phospho-1-deoxy-D-ribulos-1-ylimino)methylamino]-1-(5-phospho-beta-D-ribosyl)imidazole-4-carboxamide. It participates in amino-acid biosynthesis; L-histidine biosynthesis; L-histidine from 5-phospho-alpha-D-ribose 1-diphosphate: step 4/9. The chain is 1-(5-phosphoribosyl)-5-[(5-phosphoribosylamino)methylideneamino] imidazole-4-carboxamide isomerase from Hyphomonas neptunium (strain ATCC 15444).